A 365-amino-acid chain; its full sequence is MAKQTPLYDQHVACGARMVDFHGWMMPLHYGSQIDEHHFVRQDAGMFDVSHMTIVDLHGNRTREFLRYLLANDVAKLTQPGKALYTGMLNESGGVIDDLIVYFLSEDYFRLVVNSATRDKDLAWISQHAEPYQVEVTVRDDLALIAVQGPQAQQKVATLLTTEQQQAIAGMKPFFGIQTGDLFIATTGYTGEAGYEIALPKQQVVAFWQQLLAAGVKPAGLGARDTLRLEAGMNLYGQEMDEKTSPLAANMGWTVAWQPEDRQFIGRAALERQRMKGTEQLVGLIMTEKGVLRNELPVYFFDAAGNQHVGVITSGSFSPTLGFSIALARVPTGIGEHAVVQIRNREMPVRVTKPGFVRAGKAIVL.

The protein belongs to the GcvT family. As to quaternary structure, the glycine cleavage system is composed of four proteins: P, T, L and H.

The catalysed reaction is N(6)-[(R)-S(8)-aminomethyldihydrolipoyl]-L-lysyl-[protein] + (6S)-5,6,7,8-tetrahydrofolate = N(6)-[(R)-dihydrolipoyl]-L-lysyl-[protein] + (6R)-5,10-methylene-5,6,7,8-tetrahydrofolate + NH4(+). The glycine cleavage system catalyzes the degradation of glycine. This Yersinia pseudotuberculosis serotype O:3 (strain YPIII) protein is Aminomethyltransferase.